The chain runs to 404 residues: Coenzyme F(430) synthetase (404 aa).

112–117 (GVKGKT) contacts ATP.

It belongs to the MurCDEF family.

It catalyses the reaction 15,17(3)-seco-F430-17(3)-acid + ATP = coenzyme F430 + ADP + phosphate. Involved in the biosynthesis of the unique nickel-containing tetrapyrrole coenzyme F430, the prosthetic group of methyl-coenzyme M reductase (MCR), which plays a key role in methanogenesis and anaerobic methane oxidation. Catalyzes the activation the g-propionate side chain of 15,17(3)-seco-F430-17(3)-acid (seco-F430) for intramolecular C-C bond formation to yield the carbocyclic F ring of coenzyme F430. The sequence is that of Coenzyme F(430) synthetase from Methanocaldococcus jannaschii (strain ATCC 43067 / DSM 2661 / JAL-1 / JCM 10045 / NBRC 100440) (Methanococcus jannaschii).